The primary structure comprises 793 residues: Short transient receptor potential channel 1 (793 aa).

Positions 1 to 30 (MMAALYPSTDLSGVSSSSLPSSPSSSSPNE) are disordered. Residues 1 to 345 (MMAALYPSTD…FGQMSGYRRK (345 aa)) are Cytoplasmic-facing. The span at 15–28 (SSSSLPSSPSSSSP) shows a compositional bias: low complexity. 4 ANK repeats span residues 46-75 (LNEKLFLLACDKGDYYMVKKILEENSSGDL), 83-109 (LGRNAVTITIENESLDILQLLLDYGCQ), 111-156 (ADAL…EYST), and 158-180 (MDVAPVILAAHRNNYEILTMLLK). His-189, Cys-193, Cys-195, and Cys-198 together coordinate Zn(2+). The discontinuously helical intramembrane region spans 346-379 (PTCKKIMTVLTVGIFWPVLSLCYLIAPKSQFGRI). The Cytoplasmic segment spans residues 380–386 (IHTPFMK). The chain crosses the membrane as a helical span at residues 387-404 (FIIHGASYFTFLLLLNLY). Over 405-422 (SLVYNEDKKNTMGPALER) the chain is Extracellular. Residues 423–439 (IDYLLILWIIGMIWSDI) traverse the membrane as a helical segment. Residues 440-455 (KRLWYEGLEDFLEESR) lie on the Cytoplasmic side of the membrane. Residues 456 to 475 (NQLSFVMNSLYLATFALKVV) traverse the membrane as a helical segment. The Extracellular segment spans residues 476–496 (AHNKFHDFADRKDWDAFHPTL). A helical transmembrane segment spans residues 497 to 517 (VAEGLFAFANVLSYLRLFFMY). The Cytoplasmic portion of the chain corresponds to 518-536 (TTSSILGPLQISMGQMLQD). A helical transmembrane segment spans residues 537 to 558 (FGKFLGMFLLVLFSFTIGLTQL). Residues 559 to 623 (YDKGYTSKEQ…GEELQSFVGA (65 aa)) lie on the Extracellular side of the membrane. Residues Cys-571 and Cys-576 are joined by a disulfide bond. The helical transmembrane segment at 624 to 644 (VIVGTYNVVVVIVLTKLLVAM) threads the bilayer. Residues 645-793 (LHKSFQLIAN…SKYAMFYPRN (149 aa)) lie on the Cytoplasmic side of the membrane.

It belongs to the transient receptor (TC 1.A.4) family. STrpC subfamily. TRPC1 sub-subfamily. As to quaternary structure, heterotetramer with TRPC4 and/or TRPC5. Forms a heteromeric ion channel with TRPC4, with a 1:3 TRPC1:TRPC4 stoichiometry. Unlike other TRP channel proteins, does not form a homomeric channel. Interacts with TRPC4AP. Interacts with ITPR3. Interacts with MX1 and RNF24. Interacts with FKBP4. Interacts with PLSCR1. Interacts with PKD2L2. Forms a heterotetramer with PKD2 with a 2:2 stoichiometry; has distinct channel properties separate from PKD2 or TRPC1 homomers alone. In terms of processing, activation of PRKCA induces phosphorylation of TRPC1 and subsequent Ca2+ entry into cells.

It is found in the cell membrane. The enzyme catalyses Ca(2+)(in) = Ca(2+)(out). The catalysed reaction is Na(+)(in) = Na(+)(out). It catalyses the reaction Li(+)(in) = Li(+)(out). It carries out the reaction Cs(+)(in) = Cs(+)(out). May be operated by a phosphatidylinositol second messenger system activated by receptor tyrosine kinases or G-protein coupled receptors. Also activated by intracellular calcium store depletion. In terms of biological role, forms a receptor-activated non-selective calcium permeant cation channel. Forms a heteromeric ion channel with TRPC4 or TRPC5 that has reduced calcium permeability compared to the homomeric TRPC4 or TRPC5 channel. Also permeable to monovalent ions including sodium, lithium and cesium ions. The polypeptide is Short transient receptor potential channel 1 (Trpc1) (Mus musculus (Mouse)).